Here is a 312-residue protein sequence, read N- to C-terminus: Homoserine O-acetyltransferase (312 aa).

C142 (acyl-thioester intermediate) is an active-site residue. 2 residues coordinate substrate: K163 and S192. H235 serves as the catalytic Proton acceptor. The active site involves E237. Substrate is bound at residue R249.

The protein belongs to the MetA family.

It localises to the cytoplasm. It carries out the reaction L-homoserine + acetyl-CoA = O-acetyl-L-homoserine + CoA. It participates in amino-acid biosynthesis; L-methionine biosynthesis via de novo pathway; O-acetyl-L-homoserine from L-homoserine: step 1/1. Functionally, transfers an acetyl group from acetyl-CoA to L-homoserine, forming acetyl-L-homoserine. This chain is Homoserine O-acetyltransferase, found in Ruegeria sp. (strain TM1040) (Silicibacter sp.).